Consider the following 245-residue polypeptide: ATP synthase subunit a, chloroplastic (245 aa).

A run of 5 helical transmembrane segments spans residues 34–54 (TLMT…LSNL), 93–113 (VPFL…GALL), 132–152 (INTT…AGIS), 197–217 (LVIA…LMLL), and 218–238 (GLFT…AYIG).

Belongs to the ATPase A chain family. In terms of assembly, F-type ATPases have 2 components, CF(1) - the catalytic core - and CF(0) - the membrane proton channel. CF(1) has five subunits: alpha(3), beta(3), gamma(1), delta(1), epsilon(1). CF(0) has four main subunits: a, b, b' and c.

The protein resides in the plastid. It localises to the chloroplast thylakoid membrane. Its function is as follows. Key component of the proton channel; it plays a direct role in the translocation of protons across the membrane. The polypeptide is ATP synthase subunit a, chloroplastic (Bigelowiella natans (Pedinomonas minutissima)).